Consider the following 156-residue polypeptide: MKSLQKGFTLIELMIVVAIIGILAAIAIPQYQNYIARSQVSRVMSETGQMRTAIETCLLDGKEGKDCFIGWTTSNLLAAAGGSTTNNATAADPGQGGLNITYALESTAENKIEATFGQNAAATLHGKKLTWTRSPEATWSCSTDVDEKFKPTGCKK.

A propeptide spans 1–7 (MKSLQKG) (leader sequence). At F8 the chain carries N-methylphenylalanine. A helical transmembrane segment spans residues 8 to 28 (FTLIELMIVVAIIGILAAIAI). Cystine bridges form between C57-C67 and C141-C154.

The protein belongs to the N-Me-Phe pilin family. The pili are polar flexible filaments of about 5.4 nanometers diameter and 2.5 micrometers average length; they consist of only a single polypeptide chain arranged in a helical configuration of five subunits per turn in the assembled pilus.

The protein localises to the fimbrium. It localises to the membrane. Functionally, major component of the type IV fimbriae that plays an essential role in twitching motility, natural transformation, and protease secretion. The protein is Type IV major fimbrial protein FimA (fimA) of Dichelobacter nodosus (Bacteroides nodosus).